We begin with the raw amino-acid sequence, 183 residues long: Holliday junction branch migration complex subunit RuvA (183 aa).

The tract at residues 1-63 is domain I; that stretch reads MIVGLIGVVE…EDAHLLYGFL (63 aa). The segment at 64-141 is domain II; that stretch reads EEGEKILFER…IQDETKPMHN (78 aa). Position 141 (Asn141) is a region of interest, flexible linker. The domain III stretch occupies residues 141–183; it reads NEVFLALESLGFKSAEINKVLKTLKPSLSIEAAIKEALQQLRS.

This sequence belongs to the RuvA family. Homotetramer. Forms an RuvA(8)-RuvB(12)-Holliday junction (HJ) complex. HJ DNA is sandwiched between 2 RuvA tetramers; dsDNA enters through RuvA and exits via RuvB. An RuvB hexamer assembles on each DNA strand where it exits the tetramer. Each RuvB hexamer is contacted by two RuvA subunits (via domain III) on 2 adjacent RuvB subunits; this complex drives branch migration. In the full resolvosome a probable DNA-RuvA(4)-RuvB(12)-RuvC(2) complex forms which resolves the HJ.

It is found in the cytoplasm. Functionally, the RuvA-RuvB-RuvC complex processes Holliday junction (HJ) DNA during genetic recombination and DNA repair, while the RuvA-RuvB complex plays an important role in the rescue of blocked DNA replication forks via replication fork reversal (RFR). RuvA specifically binds to HJ cruciform DNA, conferring on it an open structure. The RuvB hexamer acts as an ATP-dependent pump, pulling dsDNA into and through the RuvAB complex. HJ branch migration allows RuvC to scan DNA until it finds its consensus sequence, where it cleaves and resolves the cruciform DNA. The polypeptide is Holliday junction branch migration complex subunit RuvA (Helicobacter pylori (strain G27)).